The chain runs to 136 residues: Small ribosomal subunit protein uS9 (136 aa).

Belongs to the universal ribosomal protein uS9 family.

In Borreliella afzelii (strain PKo) (Borrelia afzelii), this protein is Small ribosomal subunit protein uS9.